The primary structure comprises 429 residues: Histidine--tRNA ligase (429 aa).

The protein belongs to the class-II aminoacyl-tRNA synthetase family. In terms of assembly, homodimer.

It localises to the cytoplasm. The catalysed reaction is tRNA(His) + L-histidine + ATP = L-histidyl-tRNA(His) + AMP + diphosphate + H(+). In Streptococcus pneumoniae (strain P1031), this protein is Histidine--tRNA ligase.